Reading from the N-terminus, the 447-residue chain is Protein king tubby (447 aa).

Positions glycine 54–serine 84 are disordered. Residues isoleucine 62 to serine 84 are compositionally biased toward low complexity. At serine 136 the chain carries Phosphoserine. Residues glutamate 168–serine 182 are compositionally biased toward low complexity. The interval glutamate 168–serine 191 is disordered.

This sequence belongs to the TUB family.

Its subcellular location is the cytoplasm. It is found in the nucleus. The protein localises to the cell projection. It localises to the cilium membrane. The protein resides in the rhabdomere. This is Protein king tubby from Drosophila grimshawi (Hawaiian fruit fly).